The sequence spans 106 residues: Large ribosomal subunit protein uL24 (106 aa).

The protein belongs to the universal ribosomal protein uL24 family. Part of the 50S ribosomal subunit.

In terms of biological role, one of two assembly initiator proteins, it binds directly to the 5'-end of the 23S rRNA, where it nucleates assembly of the 50S subunit. Functionally, one of the proteins that surrounds the polypeptide exit tunnel on the outside of the subunit. The protein is Large ribosomal subunit protein uL24 of Paracidovorax citrulli (strain AAC00-1) (Acidovorax citrulli).